The chain runs to 415 residues: Probable disease resistance protein At5g66890 (415 aa).

The region spanning 8-43 is the NB-ARC domain; it reads SFDALPHNLRECFLDMASFLEDQRIIASTIIDLWSA. LRR repeat units lie at residues 229–251, 256–278, 280–303, 304–326, 328–351, and 352–373; these read SLEK…EDVS, SLQE…ISQV, SLKK…GDLR, DLET…IDRL, NLRF…GKLK, and KLEK…VKNL. A coiled-coil region spans residues 239–260; that stretch reads HVVDALNELEDVSETLQSLQEI.

It belongs to the disease resistance NB-LRR family.

Functionally, possible disease resistance protein. In Arabidopsis thaliana (Mouse-ear cress), this protein is Probable disease resistance protein At5g66890.